Consider the following 444-residue polypeptide: tRNA modification GTPase MnmE (444 aa).

(6S)-5-formyl-5,6,7,8-tetrahydrofolate contacts are provided by arginine 24, glutamate 81, and lysine 121. Residues 218 to 368 enclose the TrmE-type G domain; the sequence is GLTVVIAGPP…LLDALVGFAR (151 aa). GTP is bound by residues 228-233, 247-253, 272-275, and 349-351; these read NAGKST, SPQAGTT, DTAG, and SAR. The Mg(2+) site is built by serine 232 and threonine 253. Lysine 444 is a binding site for (6S)-5-formyl-5,6,7,8-tetrahydrofolate.

Belongs to the TRAFAC class TrmE-Era-EngA-EngB-Septin-like GTPase superfamily. TrmE GTPase family. Homodimer. Heterotetramer of two MnmE and two MnmG subunits. K(+) is required as a cofactor.

Its subcellular location is the cytoplasm. Exhibits a very high intrinsic GTPase hydrolysis rate. Involved in the addition of a carboxymethylaminomethyl (cmnm) group at the wobble position (U34) of certain tRNAs, forming tRNA-cmnm(5)s(2)U34. In Bradyrhizobium sp. (strain ORS 278), this protein is tRNA modification GTPase MnmE.